A 77-amino-acid polypeptide reads, in one-letter code: ATP synthase subunit c (77 aa).

Transmembrane regions (helical) follow at residues 7 to 27 and 57 to 77; these read AFKYLAASIAAGLAALAAALG and VGLIEAVPILAIVVAFLILFL.

The protein belongs to the ATPase C chain family. In terms of assembly, F-type ATPases have 2 components, F(1) - the catalytic core - and F(0) - the membrane proton channel. F(1) has five subunits: alpha(3), beta(3), gamma(1), delta(1), epsilon(1). F(0) has three main subunits: a(1), b(2) and c(10-14). The alpha and beta chains form an alternating ring which encloses part of the gamma chain. F(1) is attached to F(0) by a central stalk formed by the gamma and epsilon chains, while a peripheral stalk is formed by the delta and b chains.

It localises to the cell membrane. F(1)F(0) ATP synthase produces ATP from ADP in the presence of a proton or sodium gradient. F-type ATPases consist of two structural domains, F(1) containing the extramembraneous catalytic core and F(0) containing the membrane proton channel, linked together by a central stalk and a peripheral stalk. During catalysis, ATP synthesis in the catalytic domain of F(1) is coupled via a rotary mechanism of the central stalk subunits to proton translocation. Its function is as follows. Key component of the F(0) channel; it plays a direct role in translocation across the membrane. A homomeric c-ring of between 10-14 subunits forms the central stalk rotor element with the F(1) delta and epsilon subunits. The protein is ATP synthase subunit c of Lactobacillus helveticus (strain DPC 4571).